The primary structure comprises 92 residues: Small ribosomal subunit protein uS19c (92 aa).

The protein belongs to the universal ribosomal protein uS19 family.

It localises to the plastid. Its subcellular location is the chloroplast. Protein S19 forms a complex with S13 that binds strongly to the 16S ribosomal RNA. This chain is Small ribosomal subunit protein uS19c, found in Chloranthus spicatus (Chulantree).